A 299-amino-acid chain; its full sequence is 4-hydroxy-3-methylbut-2-enyl diphosphate reductase (299 aa).

Cysteine 12 contributes to the [4Fe-4S] cluster binding site. (2E)-4-hydroxy-3-methylbut-2-enyl diphosphate is bound by residues histidine 42 and histidine 88. Dimethylallyl diphosphate is bound by residues histidine 42 and histidine 88. Residues histidine 42 and histidine 88 each contribute to the isopentenyl diphosphate site. A [4Fe-4S] cluster-binding site is contributed by cysteine 110. A (2E)-4-hydroxy-3-methylbut-2-enyl diphosphate-binding site is contributed by histidine 138. Histidine 138 is a dimethylallyl diphosphate binding site. An isopentenyl diphosphate-binding site is contributed by histidine 138. Glutamate 140 functions as the Proton donor in the catalytic mechanism. Residue threonine 177 coordinates (2E)-4-hydroxy-3-methylbut-2-enyl diphosphate. Cysteine 205 is a binding site for [4Fe-4S] cluster. Residues serine 233, asparagine 235, and serine 277 each coordinate (2E)-4-hydroxy-3-methylbut-2-enyl diphosphate. Residues serine 233, asparagine 235, and serine 277 each contribute to the dimethylallyl diphosphate site. Positions 233, 235, and 277 each coordinate isopentenyl diphosphate.

Belongs to the IspH family. It depends on [4Fe-4S] cluster as a cofactor.

The enzyme catalyses isopentenyl diphosphate + 2 oxidized [2Fe-2S]-[ferredoxin] + H2O = (2E)-4-hydroxy-3-methylbut-2-enyl diphosphate + 2 reduced [2Fe-2S]-[ferredoxin] + 2 H(+). It carries out the reaction dimethylallyl diphosphate + 2 oxidized [2Fe-2S]-[ferredoxin] + H2O = (2E)-4-hydroxy-3-methylbut-2-enyl diphosphate + 2 reduced [2Fe-2S]-[ferredoxin] + 2 H(+). It participates in isoprenoid biosynthesis; dimethylallyl diphosphate biosynthesis; dimethylallyl diphosphate from (2E)-4-hydroxy-3-methylbutenyl diphosphate: step 1/1. Its pathway is isoprenoid biosynthesis; isopentenyl diphosphate biosynthesis via DXP pathway; isopentenyl diphosphate from 1-deoxy-D-xylulose 5-phosphate: step 6/6. Its function is as follows. Catalyzes the conversion of 1-hydroxy-2-methyl-2-(E)-butenyl 4-diphosphate (HMBPP) into a mixture of isopentenyl diphosphate (IPP) and dimethylallyl diphosphate (DMAPP). Acts in the terminal step of the DOXP/MEP pathway for isoprenoid precursor biosynthesis. This chain is 4-hydroxy-3-methylbut-2-enyl diphosphate reductase, found in Malacoplasma penetrans (strain HF-2) (Mycoplasma penetrans).